An 82-amino-acid polypeptide reads, in one-letter code: uncharacterized protein (82 aa).

Low complexity predominate over residues 29 to 38 (TATKSTSSGS). Positions 29-64 (TATKSTSSGSVPSFFTESTSTPLNQSKTNTSTLNKS) are disordered. Over residues 39–50 (VPSFFTESTSTP) the composition is skewed to polar residues. Residues 51–64 (LNQSKTNTSTLNKS) show a composition bias toward low complexity.

This is an uncharacterized protein from Dictyostelium discoideum (Social amoeba).